Consider the following 58-residue polypeptide: Cyclotide trypsin inhibitor TopI1 (58 aa).

A signal peptide spans 1-23 (MKFIIVLLLLTALTLTSIPVIEG). Residues 24 to 55 (ILKRCKTYDDCKDVCKARKGKCEFGICKCMIK) constitute a cross-link (cyclopeptide (Ile-Lys)). Intrachain disulfides connect Cys-28/Cys-45, Cys-34/Cys-50, and Cys-38/Cys-52. Residue Ser-56 is modified to Serine amide.

This is a cyclic peptide. As to expression, expressed by the venom gland.

The protein resides in the secreted. Its function is as follows. First cyclic scorpion trypsin inhibitor (Kd~0.5 nM). Does not inhibit chymotrypsin. This is Cyclotide trypsin inhibitor TopI1 from Tityus obscurus (Amazonian scorpion).